A 200-amino-acid chain; its full sequence is Holliday junction resolvase RecU (200 aa).

4 residues coordinate Mg(2+): threonine 82, aspartate 84, glutamate 97, and glutamine 116.

Belongs to the RecU family. It depends on Mg(2+) as a cofactor.

Its subcellular location is the cytoplasm. The enzyme catalyses Endonucleolytic cleavage at a junction such as a reciprocal single-stranded crossover between two homologous DNA duplexes (Holliday junction).. Functionally, endonuclease that resolves Holliday junction intermediates in genetic recombination. Cleaves mobile four-strand junctions by introducing symmetrical nicks in paired strands. Promotes annealing of linear ssDNA with homologous dsDNA. Required for DNA repair, homologous recombination and chromosome segregation. In Streptococcus sanguinis (strain SK36), this protein is Holliday junction resolvase RecU.